Consider the following 487-residue polypeptide: Protein nucleotidyltransferase YdiU (487 aa).

Residues Gly-85, Gly-87, Arg-88, Lys-108, Asp-120, Gly-121, Arg-171, and Arg-178 each contribute to the ATP site. Asp-247 (proton acceptor) is an active-site residue. Residues Asn-248 and Asp-257 each contribute to the Mg(2+) site. ATP is bound at residue Asp-257.

This sequence belongs to the SELO family. Mg(2+) serves as cofactor. It depends on Mn(2+) as a cofactor.

It catalyses the reaction L-seryl-[protein] + ATP = 3-O-(5'-adenylyl)-L-seryl-[protein] + diphosphate. The enzyme catalyses L-threonyl-[protein] + ATP = 3-O-(5'-adenylyl)-L-threonyl-[protein] + diphosphate. The catalysed reaction is L-tyrosyl-[protein] + ATP = O-(5'-adenylyl)-L-tyrosyl-[protein] + diphosphate. It carries out the reaction L-histidyl-[protein] + UTP = N(tele)-(5'-uridylyl)-L-histidyl-[protein] + diphosphate. It catalyses the reaction L-seryl-[protein] + UTP = O-(5'-uridylyl)-L-seryl-[protein] + diphosphate. The enzyme catalyses L-tyrosyl-[protein] + UTP = O-(5'-uridylyl)-L-tyrosyl-[protein] + diphosphate. Its function is as follows. Nucleotidyltransferase involved in the post-translational modification of proteins. It can catalyze the addition of adenosine monophosphate (AMP) or uridine monophosphate (UMP) to a protein, resulting in modifications known as AMPylation and UMPylation. The protein is Protein nucleotidyltransferase YdiU of Agrobacterium fabrum (strain C58 / ATCC 33970) (Agrobacterium tumefaciens (strain C58)).